The sequence spans 267 residues: Protein BMH1 (267 aa).

Residue serine 2 is modified to N-acetylserine. Residue lysine 76 forms a Glycyl lysine isopeptide (Lys-Gly) (interchain with G-Cter in ubiquitin) linkage. Serine 89 carries the phosphoserine modification. Positions 236-267 are disordered; the sequence is DMSESGQAEDQQQQQQHQQQQPPAAAEGEAPK. The span at 243–267 shows a compositional bias: low complexity; that stretch reads AEDQQQQQQHQQQQPPAAAEGEAPK.

Belongs to the 14-3-3 family. In terms of assembly, homodimer. Interacts with NTH1 (via N-terminus when phosphorylated by PKA); the interaction is direct and activates NTH1. Interacts with FIN1.

In terms of biological role, involved in growth regulation. This chain is Protein BMH1 (BMH1), found in Saccharomyces cerevisiae (strain ATCC 204508 / S288c) (Baker's yeast).